The following is a 372-amino-acid chain: Ligninase LG6 (372 aa).

Residues 1 to 21 (MALKQLAAAVALALSIQAAQG) form the signal peptide. Positions 22-28 (AAVKEKR) are excised as a propeptide. Disulfide bonds link Cys31/Cys43 and Cys62/Cys148. The active-site Proton acceptor is His75. Residues Asp76, Gly94, Asp96, and Ser98 each coordinate Ca(2+). His204 serves as a coordination point for heme b. Positions 205, 222, 224, 227, and 229 each coordinate Ca(2+). Cys277 and Cys345 are joined by a disulfide. A glycan (N-linked (GlcNAc...) asparagine) is linked at Asn285. Positions 352–361 (TLTTLPGPET) are enriched in low complexity. Residues 352 to 372 (TLTTLPGPETSVQRIQPPPGA) are disordered.

This sequence belongs to the peroxidase family. Ligninase subfamily. The cofactor is heme b. Ca(2+) serves as cofactor.

The catalysed reaction is 1-(3,4-dimethoxyphenyl)-2-(2-methoxyphenoxy)propane-1,3-diol + H2O2 = 3,4-dimethoxybenzaldehyde + guaiacol + glycolaldehyde + H2O. It catalyses the reaction 2 (3,4-dimethoxyphenyl)methanol + H2O2 = 2 (3,4-dimethoxyphenyl)methanol radical + 2 H2O. The protein operates within secondary metabolite metabolism; lignin degradation. Its function is as follows. Depolymerization of lignin. Catalyzes the C(alpha)-C(beta) cleavage of the propyl side chains of lignin. This Phanerodontia chrysosporium (White-rot fungus) protein is Ligninase LG6 (GLG6).